Consider the following 385-residue polypeptide: MNVKEPAEEAAIQLRTERQRIEPEGEEQSEQPTDLRGLFPEEIAALLTPWGQPTFRGKQIFKWLQNRAVREVAEMTDLPQALRVRLGEAGWLKPLAPERHRVARDGTEKYLWRLADGELIESVLMPYRRAQTRDRVTVCLSTQAGCPLSCRFCATGRQGFRRNLTAAEIVGQVLDITHEKRKDDPDFKVTNLVFMGMGEPFLNYDNVRRAIGLFTHPEGQAIGQRRITVSTAGIVPGIDRFADEDWEVNLALSLHAADDKQRSEWMPVNDRFPLAQVLEACRRYWEKTRRRLSVEYALMAGVNDRLEDARRLASLFKGWPIHLNLIPVNAVAGIGVRRPEREPTERFLAELRRWGVDAVIREERGQDIEAACGQLRGAAKGEEEA.

The disordered stretch occupies residues 1 to 35; the sequence is MNVKEPAEEAAIQLRTERQRIEPEGEEQSEQPTDL. The Proton acceptor role is filled by Glu-121. Positions 132-367 constitute a Radical SAM core domain; the sequence is TRDRVTVCLS…AVIREERGQD (236 aa). A disulfide bond links Cys-139 and Cys-372. Cys-146, Cys-150, and Cys-153 together coordinate [4Fe-4S] cluster. Residues 198–199, Ser-230, 253–255, and Asn-329 contribute to the S-adenosyl-L-methionine site; these read GE and SLH. Catalysis depends on Cys-372, which acts as the S-methylcysteine intermediate.

This sequence belongs to the radical SAM superfamily. RlmN family. [4Fe-4S] cluster serves as cofactor.

It localises to the cytoplasm. The enzyme catalyses adenosine(2503) in 23S rRNA + 2 reduced [2Fe-2S]-[ferredoxin] + 2 S-adenosyl-L-methionine = 2-methyladenosine(2503) in 23S rRNA + 5'-deoxyadenosine + L-methionine + 2 oxidized [2Fe-2S]-[ferredoxin] + S-adenosyl-L-homocysteine. The catalysed reaction is adenosine(37) in tRNA + 2 reduced [2Fe-2S]-[ferredoxin] + 2 S-adenosyl-L-methionine = 2-methyladenosine(37) in tRNA + 5'-deoxyadenosine + L-methionine + 2 oxidized [2Fe-2S]-[ferredoxin] + S-adenosyl-L-homocysteine. In terms of biological role, specifically methylates position 2 of adenine 2503 in 23S rRNA and position 2 of adenine 37 in tRNAs. This is Probable dual-specificity RNA methyltransferase RlmN from Heliobacterium modesticaldum (strain ATCC 51547 / Ice1).